The following is a 231-amino-acid chain: 2-C-methyl-D-erythritol 4-phosphate cytidylyltransferase (231 aa).

This sequence belongs to the IspD/TarI cytidylyltransferase family. IspD subfamily.

It carries out the reaction 2-C-methyl-D-erythritol 4-phosphate + CTP + H(+) = 4-CDP-2-C-methyl-D-erythritol + diphosphate. It functions in the pathway isoprenoid biosynthesis; isopentenyl diphosphate biosynthesis via DXP pathway; isopentenyl diphosphate from 1-deoxy-D-xylulose 5-phosphate: step 2/6. Catalyzes the formation of 4-diphosphocytidyl-2-C-methyl-D-erythritol from CTP and 2-C-methyl-D-erythritol 4-phosphate (MEP). The chain is 2-C-methyl-D-erythritol 4-phosphate cytidylyltransferase from Rubrobacter xylanophilus (strain DSM 9941 / JCM 11954 / NBRC 16129 / PRD-1).